We begin with the raw amino-acid sequence, 176 residues long: ATP synthase subunit delta (176 aa).

Belongs to the ATPase delta chain family. As to quaternary structure, F-type ATPases have 2 components, F(1) - the catalytic core - and F(0) - the membrane proton channel. F(1) has five subunits: alpha(3), beta(3), gamma(1), delta(1), epsilon(1). F(0) has three main subunits: a(1), b(2) and c(10-14). The alpha and beta chains form an alternating ring which encloses part of the gamma chain. F(1) is attached to F(0) by a central stalk formed by the gamma and epsilon chains, while a peripheral stalk is formed by the delta and b chains.

It is found in the cell inner membrane. F(1)F(0) ATP synthase produces ATP from ADP in the presence of a proton or sodium gradient. F-type ATPases consist of two structural domains, F(1) containing the extramembraneous catalytic core and F(0) containing the membrane proton channel, linked together by a central stalk and a peripheral stalk. During catalysis, ATP synthesis in the catalytic domain of F(1) is coupled via a rotary mechanism of the central stalk subunits to proton translocation. Its function is as follows. This protein is part of the stalk that links CF(0) to CF(1). It either transmits conformational changes from CF(0) to CF(1) or is implicated in proton conduction. The chain is ATP synthase subunit delta from Campylobacter fetus subsp. fetus (strain 82-40).